The primary structure comprises 119 residues: Large ribosomal subunit protein bL20 (119 aa).

The protein belongs to the bacterial ribosomal protein bL20 family.

In terms of biological role, binds directly to 23S ribosomal RNA and is necessary for the in vitro assembly process of the 50S ribosomal subunit. It is not involved in the protein synthesizing functions of that subunit. This chain is Large ribosomal subunit protein bL20, found in Teredinibacter turnerae (strain ATCC 39867 / T7901).